The sequence spans 204 residues: Guanylate kinase (204 aa).

Residues 18–198 (GKLIIFSAPS…AKAETLEVIK (181 aa)) form the Guanylate kinase-like domain. 25–32 (APSGSGKS) contacts ATP.

It belongs to the guanylate kinase family.

The protein localises to the cytoplasm. The catalysed reaction is GMP + ATP = GDP + ADP. Essential for recycling GMP and indirectly, cGMP. The chain is Guanylate kinase from Bacteroides thetaiotaomicron (strain ATCC 29148 / DSM 2079 / JCM 5827 / CCUG 10774 / NCTC 10582 / VPI-5482 / E50).